A 326-amino-acid polypeptide reads, in one-letter code: Ficolin-1 (326 aa).

The first 29 residues, 1–29, serve as a signal peptide directing secretion; that stretch reads MELSGATMARGLAVLLVLFLHIKNLPAQA. In terms of domain architecture, Collagen-like spans 55–93; sequence GLPGAPGPKGEAGVIGERGERGLPGAPGKAGPVGPKGDR. The disordered stretch occupies residues 72–111; sequence RGERGLPGAPGKAGPVGPKGDRGEKGMRGEKGDAGQSQSC. The segment covering 77 to 89 has biased composition (low complexity); it reads LPGAPGKAGPVGP. A compositionally biased stretch (basic and acidic residues) spans 90 to 104; the sequence is KGDRGEKGMRGEKGD. The Fibrinogen C-terminal domain occupies 109–326; it reads QSCATGPRNC…KVSEMKVRPA (218 aa). Intrachain disulfides connect Cys-111-Cys-139 and Cys-118-Cys-146. The interval 115 to 154 is a domain; contributes to trimerization; that stretch reads PRNCKDLLDRGYFLSGWHTIYLPDCRPLTVLCDMDTDGGG. A b domain; contributes to trimerization region spans residues 155–243; the sequence is WTVFQRRMDG…LVLGAFVGGS (89 aa). Residues Asp-262, Asp-264, Ser-266, and Ser-268 each contribute to the Ca(2+) site. Cysteines 270 and 283 form a disulfide. Residue 282 to 284 participates in a carbohydrate binding; it reads DCH. The N-linked (GlcNAc...) asparagine glycan is linked to Asn-305. The segment at 317-326 is p domain; the sequence is KVSEMKVRPA.

It belongs to the ficolin lectin family. Homotrimer. Interacts with elastin/ELN. Interacts (via Fibrinogen C-terminal domain) with FFAR2. Interacts with CRP; may regulate monocyte activation by FCN1. As to expression, peripheral blood leukocytes, monocytes and granulocytes. Also detected in spleen, lung, and thymus, may be due to the presence of tissue macrophages or trapped blood in these tissues. Not detected on lymphocytes.

The protein resides in the secreted. It is found in the cell membrane. Functionally, extracellular lectin functioning as a pattern-recognition receptor in innate immunity. Binds the sugar moieties of pathogen-associated molecular patterns (PAMPs) displayed on microbes and activates the lectin pathway of the complement system. May also activate monocytes through a G protein-coupled receptor, FFAR2, inducing the secretion of interleukin-8/IL-8. Binds preferentially to 9-O-acetylated 2-6-linked sialic acid derivatives and to various glycans containing sialic acid engaged in a 2-3 linkage. The chain is Ficolin-1 (FCN1) from Homo sapiens (Human).